The following is a 486-amino-acid chain: Arginine deiminase (486 aa).

Cysteine 476 functions as the Amidino-cysteine intermediate in the catalytic mechanism.

Belongs to the arginine deiminase family.

The protein resides in the cytoplasm. It catalyses the reaction L-arginine + H2O = L-citrulline + NH4(+). Its pathway is amino-acid degradation; L-arginine degradation via ADI pathway; carbamoyl phosphate from L-arginine: step 1/2. Its function is as follows. Involved in the arginine deiminase pathway of fermentative arginine utilization. The polypeptide is Arginine deiminase (arcA) (Halobacterium salinarum (strain ATCC 29341 / DSM 671 / R1)).